Consider the following 371-residue polypeptide: Chaperone protein DnaJ (371 aa).

The region spanning 4-68 (DYYKILGVSK…QKRAAYDRFG (65 aa)) is the J domain. Residues 134–212 (GIEKNISFSS…CHGMGRCHKQ (79 aa)) form a CR-type zinc finger. Zn(2+)-binding residues include cysteine 147, cysteine 150, cysteine 164, cysteine 167, cysteine 186, cysteine 189, cysteine 200, and cysteine 203. 4 CXXCXGXG motif repeats span residues 147 to 154 (CDTCHGSG), 164 to 171 (CDACGGVG), 186 to 193 (CHKCKGNG), and 200 to 207 (CKKCHGMG).

This sequence belongs to the DnaJ family. In terms of assembly, homodimer. Requires Zn(2+) as cofactor.

The protein localises to the cytoplasm. In terms of biological role, participates actively in the response to hyperosmotic and heat shock by preventing the aggregation of stress-denatured proteins and by disaggregating proteins, also in an autonomous, DnaK-independent fashion. Unfolded proteins bind initially to DnaJ; upon interaction with the DnaJ-bound protein, DnaK hydrolyzes its bound ATP, resulting in the formation of a stable complex. GrpE releases ADP from DnaK; ATP binding to DnaK triggers the release of the substrate protein, thus completing the reaction cycle. Several rounds of ATP-dependent interactions between DnaJ, DnaK and GrpE are required for fully efficient folding. Also involved, together with DnaK and GrpE, in the DNA replication of plasmids through activation of initiation proteins. In Rickettsia akari (strain Hartford), this protein is Chaperone protein DnaJ.